The sequence spans 270 residues: Orotidine 5'-phosphate decarboxylase (270 aa).

Residues D39, 61–63, 93–102, Y221, and R239 each bind substrate; these read KTH and DRKFADIGNT. The Proton donor role is filled by K95.

It belongs to the OMP decarboxylase family.

The enzyme catalyses orotidine 5'-phosphate + H(+) = UMP + CO2. It participates in pyrimidine metabolism; UMP biosynthesis via de novo pathway; UMP from orotate: step 2/2. This Candida dubliniensis (strain CD36 / ATCC MYA-646 / CBS 7987 / NCPF 3949 / NRRL Y-17841) (Yeast) protein is Orotidine 5'-phosphate decarboxylase (URA3).